A 1148-amino-acid chain; its full sequence is Trafficking protein particle complex subunit 9 (1148 aa).

2 positions are modified to phosphoserine: serine 566 and serine 953.

The protein belongs to the NIBP family. As to quaternary structure, component of the multisubunit TRAPP (transport protein particle) complex, which includes at least TRAPPC2, TRAPPC2L, TRAPPC3, TRAPPC3L, TRAPPC4, TRAPPC5, TRAPPC8, TRAPPC9, TRAPPC10, TRAPPC11 and TRAPPC12. Directly interacts with IKBKB and MAP3K14. In terms of tissue distribution, expressed in neurons of the pyramidal layer of the cortex, in spinal cord motor neurons and white matter neurons (at protein level).

Its subcellular location is the golgi apparatus. It is found in the cis-Golgi network. It localises to the endoplasmic reticulum. The protein localises to the cytoplasm. Functionally, functions as an activator of NF-kappa-B through increased phosphorylation of the IKK complex. May function in neuronal cells differentiation. May play a role in vesicular transport from endoplasmic reticulum to Golgi. The polypeptide is Trafficking protein particle complex subunit 9 (Trappc9) (Mus musculus (Mouse)).